Consider the following 362-residue polypeptide: Adenosine deaminase (362 aa).

Zn(2+) is bound by residues His-19 and His-21. Residues His-21, Asp-23, and Gly-181 each coordinate substrate. Residue His-208 coordinates Zn(2+). The active-site Proton donor is Glu-211. Asp-300 contributes to the Zn(2+) binding site.

It belongs to the metallo-dependent hydrolases superfamily. Adenosine and AMP deaminases family. Adenosine deaminase subfamily. Requires Zn(2+) as cofactor.

It carries out the reaction adenosine + H2O + H(+) = inosine + NH4(+). The catalysed reaction is 2'-deoxyadenosine + H2O + H(+) = 2'-deoxyinosine + NH4(+). In terms of biological role, catalyzes the hydrolytic deamination of adenosine and 2-deoxyadenosine. This chain is Adenosine deaminase, found in Mycobacterium sp. (strain MCS).